The sequence spans 471 residues: UDP-N-acetylmuramate--L-alanine ligase (471 aa).

Gly-112–Thr-118 provides a ligand contact to ATP.

This sequence belongs to the MurCDEF family.

Its subcellular location is the cytoplasm. It catalyses the reaction UDP-N-acetyl-alpha-D-muramate + L-alanine + ATP = UDP-N-acetyl-alpha-D-muramoyl-L-alanine + ADP + phosphate + H(+). It functions in the pathway cell wall biogenesis; peptidoglycan biosynthesis. In terms of biological role, cell wall formation. In Aromatoleum aromaticum (strain DSM 19018 / LMG 30748 / EbN1) (Azoarcus sp. (strain EbN1)), this protein is UDP-N-acetylmuramate--L-alanine ligase.